The chain runs to 476 residues: Exodeoxyribonuclease 7 large subunit (476 aa).

It belongs to the XseA family. As to quaternary structure, heterooligomer composed of large and small subunits.

The protein resides in the cytoplasm. It carries out the reaction Exonucleolytic cleavage in either 5'- to 3'- or 3'- to 5'-direction to yield nucleoside 5'-phosphates.. Bidirectionally degrades single-stranded DNA into large acid-insoluble oligonucleotides, which are then degraded further into small acid-soluble oligonucleotides. The sequence is that of Exodeoxyribonuclease 7 large subunit from Bartonella bacilliformis (strain ATCC 35685 / KC583 / Herrer 020/F12,63).